Consider the following 285-residue polypeptide: Acrosomal protein SP-10 (285 aa).

The signal sequence occupies residues 1–21 (MNMFLLLMSLYLLGSARGTSG). The segment at 64–200 (TLSEHGSSEH…GEQPSGAPIS (137 aa)) is disordered. A run of 19 repeats spans residues 66 to 70 (SEHGS), 71 to 75 (SEHGS), 85 to 89 (PGEHA), 91 to 95 (SEHAS), 110 to 114 (VGEQP), 115 to 119 (SGEQP), 120 to 124 (SGEHL), 125 to 129 (SGEQS), 130 to 134 (LGEHA), 135 to 139 (SGEQP), 145 to 149 (SGEHA), 150 to 154 (SGEQP), 155 to 159 (SGEHA), 160 to 164 (SGEQP), 165 to 169 (SGEQP), 170 to 174 (SGEHA), 175 to 179 (SGEQS), 180 to 184 (LGEHA), and 190 to 194 (SGEQP). Residues 66-95 (SEHGSSEHGSREHTVAEHTPGEHAESEHAS) are 3 X 5 AA repeats of S-E-H-[GA]-A. Residues 69 to 95 (GSSEHGSREHTVAEHTPGEHAESEHAS) are compositionally biased toward basic and acidic residues. The segment at 85–184 (PGEHAESEHA…SGEQSLGEHA (100 aa)) is 7 X 5 AA repeats of S-G-E-H-[AL]. The segment at 110 to 194 (VGEQPSGEQP…LSEKPSGEQP (85 aa)) is 9 X 5 AA repeats of [SV]-G-E-Q-[PSA]. N-linked (GlcNAc...) asparagine glycosylation occurs at asparagine 278.

Testis.

The protein localises to the cytoplasmic vesicle. It is found in the secretory vesicle. Its subcellular location is the acrosome. This Papio hamadryas (Hamadryas baboon) protein is Acrosomal protein SP-10 (ACRV1).